A 259-amino-acid chain; its full sequence is tRNA pseudouridine synthase A (259 aa).

The active-site Nucleophile is the Asp-52. Residue Tyr-110 participates in substrate binding.

The protein belongs to the tRNA pseudouridine synthase TruA family. In terms of assembly, homodimer.

The enzyme catalyses uridine(38/39/40) in tRNA = pseudouridine(38/39/40) in tRNA. Its function is as follows. Formation of pseudouridine at positions 38, 39 and 40 in the anticodon stem and loop of transfer RNAs. The polypeptide is tRNA pseudouridine synthase A (Coprothermobacter proteolyticus (strain ATCC 35245 / DSM 5265 / OCM 4 / BT)).